A 125-amino-acid polypeptide reads, in one-letter code: Holo-[acyl-carrier-protein] synthase (125 aa).

2 residues coordinate Mg(2+): Asp8 and Glu57.

This sequence belongs to the P-Pant transferase superfamily. AcpS family. Mg(2+) serves as cofactor.

The protein resides in the cytoplasm. The enzyme catalyses apo-[ACP] + CoA = holo-[ACP] + adenosine 3',5'-bisphosphate + H(+). Its function is as follows. Transfers the 4'-phosphopantetheine moiety from coenzyme A to a Ser of acyl-carrier-protein. The chain is Holo-[acyl-carrier-protein] synthase from Nitrosomonas europaea (strain ATCC 19718 / CIP 103999 / KCTC 2705 / NBRC 14298).